Reading from the N-terminus, the 259-residue chain is Thiazole synthase (259 aa).

The active-site Schiff-base intermediate with DXP is the lysine 99. 1-deoxy-D-xylulose 5-phosphate is bound by residues glycine 160, 187–188 (AG), and 209–210 (NT).

This sequence belongs to the ThiG family. Homotetramer. Forms heterodimers with either ThiH or ThiS.

Its subcellular location is the cytoplasm. The enzyme catalyses [ThiS sulfur-carrier protein]-C-terminal-Gly-aminoethanethioate + 2-iminoacetate + 1-deoxy-D-xylulose 5-phosphate = [ThiS sulfur-carrier protein]-C-terminal Gly-Gly + 2-[(2R,5Z)-2-carboxy-4-methylthiazol-5(2H)-ylidene]ethyl phosphate + 2 H2O + H(+). It functions in the pathway cofactor biosynthesis; thiamine diphosphate biosynthesis. Its function is as follows. Catalyzes the rearrangement of 1-deoxy-D-xylulose 5-phosphate (DXP) to produce the thiazole phosphate moiety of thiamine. Sulfur is provided by the thiocarboxylate moiety of the carrier protein ThiS. In vitro, sulfur can be provided by H(2)S. The protein is Thiazole synthase of Solibacter usitatus (strain Ellin6076).